The sequence spans 163 residues: Bacterial ISG15-like ubiquitin-like protein BilA (163 aa).

Ubiquitin-like BIL-type domains lie at L4–R80 and I81–G163. G163 participates in a covalent cross-link: Glycyl lysine isopeptide (Gly-Lys) (interchain with K-? in central tail fiber acceptor protein).

Its function is as follows. Component of the Bil (bacterial ISG15-like) antiviral defense system, composed of BilA, BilB, BilC and BilD. The Bil system specifically conjugates a ubiquitin-like moiety (bilA) to the bacteriophage central tail fiber (CTF, or tip attachment protein J) via reactions involving E1 (bilD) and E2 (bilB). Modifies CTF of phage SECphi27 and SECphi4, which probably interferes with assembly of the phage tail. Also modifies T5 baseplate hub protein pb3 (gene D16), but not gp27 of phage T6 (Bil defends against T6). Bil-encoding bacteria produce mostly defective phage SECphi27, many of which have phage assembly defects, including no tails. SECphi27 phage progeny produced in E.coli with the Bil system inject less DNA into naive host cells, maybe because the phage are less able to adsorb and inject their DNA into host cells. In terms of biological role, expression of the Bil system in E.coli (strain MG1655) confers about 100-fold resistance to phage SECphi27, SECphi18, SECphi6, SECphi4 and T5, but not to SECphi17. When cells expressing the Bil system are infected by phage SECphi27 at low multiplicity of infection (0.03 MOI) the culture survives, at 3.0 MOI the culture collapses at the same time as cells without the Bil system. In Collimonas sp. (strain OK412), this protein is Bacterial ISG15-like ubiquitin-like protein BilA.